Here is a 428-residue protein sequence, read N- to C-terminus: Phosphomethylpyrimidine synthase 2 (428 aa).

Residues asparagine 65, methionine 94, tyrosine 123, histidine 158, 180-182 (SRG), 221-224 (DGMR), and glutamate 260 each bind substrate. Histidine 264 contributes to the Zn(2+) binding site. Substrate is bound at residue tyrosine 287. Residue histidine 328 coordinates Zn(2+). [4Fe-4S] cluster-binding residues include cysteine 405, cysteine 408, and cysteine 412.

Belongs to the ThiC family. It depends on [4Fe-4S] cluster as a cofactor.

The enzyme catalyses 5-amino-1-(5-phospho-beta-D-ribosyl)imidazole + S-adenosyl-L-methionine = 4-amino-2-methyl-5-(phosphooxymethyl)pyrimidine + CO + 5'-deoxyadenosine + formate + L-methionine + 3 H(+). It functions in the pathway cofactor biosynthesis; thiamine diphosphate biosynthesis. In terms of biological role, catalyzes the synthesis of the hydroxymethylpyrimidine phosphate (HMP-P) moiety of thiamine from aminoimidazole ribotide (AIR) in a radical S-adenosyl-L-methionine (SAM)-dependent reaction. In Methanosarcina barkeri (strain Fusaro / DSM 804), this protein is Phosphomethylpyrimidine synthase 2.